The chain runs to 531 residues: GTPase Obg (531 aa).

The Obg domain maps to 2–159; sequence ASFVDRVIVH…QEVELELKSI (158 aa). The OBG-type G domain occupies 160–341; it reads ADIALVGFPS…LSFAMAALVS (182 aa). GTP-binding positions include 166-173, 191-195, 212-215, 293-296, and 322-324; these read GFPSAGKS, FTTLV, DVPG, NKVD, and STA. Mg(2+) is bound by residues Ser-173 and Thr-193. Positions 346–365 are disordered; that stretch reads QEEQREQQRQTVPVLQPEPV. The OCT domain occupies 368 to 453; sequence RRGRDRREFV…ENGVVFDWEP (86 aa). The disordered stretch occupies residues 459-531; the sequence is AELLGGPRGS…TSETKETNEK (73 aa). 2 stretches are compositionally biased toward basic and acidic residues: residues 468-507 and 514-531; these read SDLR…ERRA and VDAR…TNEK.

It belongs to the TRAFAC class OBG-HflX-like GTPase superfamily. OBG GTPase family. In terms of assembly, monomer. The cofactor is Mg(2+).

It is found in the cytoplasm. Functionally, an essential GTPase which binds GTP, GDP and possibly (p)ppGpp with moderate affinity, with high nucleotide exchange rates and a fairly low GTP hydrolysis rate. Plays a role in control of the cell cycle, stress response, ribosome biogenesis and in those bacteria that undergo differentiation, in morphogenesis control. In Kocuria rhizophila (strain ATCC 9341 / DSM 348 / NBRC 103217 / DC2201), this protein is GTPase Obg.